The sequence spans 251 residues: Flap endonuclease Xni (251 aa).

D104 provides a ligand contact to Mg(2+). The 5'-3' exonuclease domain occupies V160 to L249. K(+) contacts are provided by L171, A172, P180, V182, and I185. The interval G184–S189 is interaction with DNA.

This sequence belongs to the Xni family. It depends on Mg(2+) as a cofactor. The cofactor is K(+).

Its function is as follows. Has flap endonuclease activity. During DNA replication, flap endonucleases cleave the 5'-overhanging flap structure that is generated by displacement synthesis when DNA polymerase encounters the 5'-end of a downstream Okazaki fragment. The chain is Flap endonuclease Xni from Klebsiella pneumoniae subsp. pneumoniae (strain ATCC 700721 / MGH 78578).